Here is an 893-residue protein sequence, read N- to C-terminus: Alpha-actinin-1 (893 aa).

The actin-binding stretch occupies residues 1–248 (MDHHYDPQQT…IMTYVSSFYH (248 aa)). Tyr13 bears the Phosphotyrosine; by FAK1 mark. 2 consecutive Calponin-homology (CH) domains span residues 32–136 (KQQR…LRFA) and 145–251 (TSAK…HAFS). Spectrin repeat units lie at residues 275 to 385 (QLME…WLLN), 395 to 500 (HLAE…ALER), 510 to 621 (QLYL…ALME), and 631 to 734 (RLRK…EVEN). EF-hand domains are found at residues 747-782 (EQMN…LGYD) and 788-823 (QGEA…ETAD). The Ca(2+) site is built by Asp760, Asp762, Ser764, Thr766, and Glu771.

This sequence belongs to the alpha-actinin family. As to quaternary structure, homodimer; antiparallel. Interacts with PDLIM4 (via PDZ domain).

The protein localises to the cytoplasm. It localises to the cytoskeleton. Its subcellular location is the myofibril. It is found in the sarcomere. The protein resides in the z line. The protein localises to the cell membrane. It localises to the cell junction. Its subcellular location is the cell projection. It is found in the ruffle. In terms of biological role, F-actin cross-linking protein is thought to anchor actin to a variety of intracellular structures. This is a bundling protein. The polypeptide is Alpha-actinin-1 (ACTN1) (Gallus gallus (Chicken)).